The chain runs to 292 residues: CCR4-NOT transcription complex subunit 8 (292 aa).

Residues Asp-40, Glu-42, Asp-161, and Asp-230 each contribute to the a divalent metal cation site.

The protein belongs to the CAF1 family. Component of the CCR4-NOT complex; distinct complexes seem to exist that differ in the participation of probably mutually exclusive catalytic subunits; the complex contains two deadenylase subunits, CNOT6 or CNOT6L, and CNOT7 or CNOT8. In the complex interacts directly with CNOT1. Interacts with BTG1, BTG2 and TOB1. Interacts with BTG4.

The protein localises to the cytoplasm. The protein resides in the nucleus. The catalysed reaction is Exonucleolytic cleavage of poly(A) to 5'-AMP.. Its function is as follows. Has 3'-5' poly(A) exoribonuclease activity for synthetic poly(A) RNA substrate. Its function seems to be partially redundant with that of CNOT7. Catalytic component of the CCR4-NOT complex which is linked to various cellular processes including bulk mRNA degradation, miRNA-mediated repression, translational repression during translational initiation and general transcription regulation. During miRNA-mediated repression the complex also seems to act as translational repressor during translational initiation. Additional complex functions may be a consequence of its influence on mRNA expression. Associates with members of the BTG family such as TOB1 and BTG2 and is required for their anti-proliferative activity. The chain is CCR4-NOT transcription complex subunit 8 (Cnot8) from Mus musculus (Mouse).